Reading from the N-terminus, the 125-residue chain is Large ribosomal subunit protein bL12 (125 aa).

Homodimer. Part of the ribosomal stalk of the 50S ribosomal subunit. Forms a multimeric L10(L12)X complex, where L10 forms an elongated spine to which 2 to 4 L12 dimers bind in a sequential fashion. Binds GTP-bound translation factors. In terms of processing, two isoforms seem to exist. One is probably dimethylated on Lys-69 and monomethylated on Lys-86 while the other is probably acetylated or trimethylated on both Lys-86 and Lys-89.

Its function is as follows. Forms part of the ribosomal stalk which helps the ribosome interact with GTP-bound translation factors. Is thus essential for accurate translation. The polypeptide is Large ribosomal subunit protein bL12 (Rhodopseudomonas palustris (strain ATCC BAA-98 / CGA009)).